The sequence spans 351 residues: 3-ketosteroid-9-alpha-monooxygenase, ferredoxin reductase component (351 aa).

The FAD-binding FR-type domain occupies 10–116 (SRSVILTVSA…LPPAGVFTPK (107 aa)). A 2Fe-2S ferredoxin-type domain is found at 264-351 (ATVEVELDGE…PVTDHLKIEF (88 aa)). [2Fe-2S] cluster-binding residues include C300, C305, C308, and C338.

The two-component system 3-ketosteroid-9-alpha-monooxygenase is composed of an oxygenase component KshA and a reductase component KshB. FAD is required as a cofactor. The cofactor is [2Fe-2S] cluster.

It carries out the reaction androsta-1,4-diene-3,17-dione + 2 reduced [2Fe-2S]-[ferredoxin] + O2 + 2 H(+) = 9alpha-hydroxyandrosta-1,4-diene-3,17-dione + 2 oxidized [2Fe-2S]-[ferredoxin] + H2O. It participates in steroid metabolism; cholesterol degradation. With respect to regulation, KSH activity is completely inhibited by zinc ions. KshB is specifically inhibited by Cu(2+) ions. Its function is as follows. Probably involved in the degradation of cholesterol. In vitro, catalyzes the introduction of a 9alpha-hydroxyl moiety into the ring B of 3-ketosteroid substrates such as 1,4-androstadiene-3,17-dione (ADD), 4-androstene-3,17-dione (AD), 4-androstene-17beta-ol-3-one (testosterone), 4-pregnene-3,20-dione (progesterone), 19-nor-4-androstene-3,17-dione (nordion), 1-(5alpha)-androstene-3,17-dione, 5alpha-androstane-3,17-dione and 5beta-androstane-3,17-dione. KSH has the highest activity with 3-keto-Delta4 steroid substrates. In Rhodococcus rhodochrous, this protein is 3-ketosteroid-9-alpha-monooxygenase, ferredoxin reductase component.